The primary structure comprises 385 residues: Transcription factor-like protein DPB (385 aa).

Disordered stretches follow at residues M1–I53 and D71–R102. The segment covering P22 to V31 has biased composition (polar residues). Over residues S32–I53 the composition is skewed to low complexity. A DNA-binding region spans residues G101–P184. Residues D150–P184 carry the DEF box motif. Positions R185–S234 form a coiled coil. The disordered stretch occupies residues P296 to N385. A compositionally biased stretch (polar residues) spans P300–T327. Residues H336–Q349 are compositionally biased toward low complexity. Residues E355–D364 show a composition bias toward polar residues.

This sequence belongs to the E2F/DP family. In terms of assembly, heterodimer with non-phosphorylated E2FC. No interaction with phosphorylated E2FC. Interacts preferentially with E2FC, but also with E2FA and E2FB. Interacts with SKP2A. Targeted for proteasomal degradation by the SCF(SKP2A) E3 ubiquitin ligase complex. Post-translationally, phosphorylated. Ubiquitous.

It is found in the nucleus. It localises to the cytoplasm. Involved in the regulation of the G1/S transition. Increases the DNA binding activity of E2F proteins after heterodimerization. The complex DPB/E2FC restricts cell division and lateral root initiation and may function as a negative regulator of E2F-regulated genes. The interaction with SKP2A is controlled by auxin. The sequence is that of Transcription factor-like protein DPB (DPB) from Arabidopsis thaliana (Mouse-ear cress).